A 349-amino-acid chain; its full sequence is Nuclear distribution protein nudE homolog 1 (349 aa).

Residues 23 to 189 (AMKYKTCSEE…ELAVQQKQEK (167 aa)) are a coiled coil. The segment at 182–201 (AVQQKQEKPKSNMGSPETER) is disordered.

The protein belongs to the nudE family. As to quaternary structure, self-associates. Interacts with pafah1b1. In terms of processing, phosphorylated in mitosis.

It is found in the cytoplasm. Its subcellular location is the cytoskeleton. It localises to the microtubule organizing center. The protein localises to the centrosome. The protein resides in the spindle. It is found in the chromosome. Its subcellular location is the centromere. It localises to the kinetochore. The protein localises to the cleavage furrow. The protein resides in the cytoplasmic vesicle membrane. Its function is as follows. Required for centrosome duplication and formation and function of the mitotic spindle. The sequence is that of Nuclear distribution protein nudE homolog 1 (nde1) from Xenopus tropicalis (Western clawed frog).